Reading from the N-terminus, the 165-residue chain is Biosynthetic peptidoglycan transglycosylase (165 aa).

The protein belongs to the glycosyltransferase 51 family.

The protein localises to the cell inner membrane. It carries out the reaction [GlcNAc-(1-&gt;4)-Mur2Ac(oyl-L-Ala-gamma-D-Glu-L-Lys-D-Ala-D-Ala)](n)-di-trans,octa-cis-undecaprenyl diphosphate + beta-D-GlcNAc-(1-&gt;4)-Mur2Ac(oyl-L-Ala-gamma-D-Glu-L-Lys-D-Ala-D-Ala)-di-trans,octa-cis-undecaprenyl diphosphate = [GlcNAc-(1-&gt;4)-Mur2Ac(oyl-L-Ala-gamma-D-Glu-L-Lys-D-Ala-D-Ala)](n+1)-di-trans,octa-cis-undecaprenyl diphosphate + di-trans,octa-cis-undecaprenyl diphosphate + H(+). Its pathway is cell wall biogenesis; peptidoglycan biosynthesis. In terms of biological role, peptidoglycan polymerase that catalyzes glycan chain elongation from lipid-linked precursors. The sequence is that of Biosynthetic peptidoglycan transglycosylase from Neisseria meningitidis.